We begin with the raw amino-acid sequence, 512 residues long: Maturase K (512 aa).

This sequence belongs to the intron maturase 2 family. MatK subfamily.

The protein localises to the plastid. Its subcellular location is the chloroplast. Its function is as follows. Usually encoded in the trnK tRNA gene intron. Probably assists in splicing its own and other chloroplast group II introns. The sequence is that of Maturase K from Oenothera argillicola (Appalachian evening primrose).